The following is a 351-amino-acid chain: 7,8-didemethyl-8-hydroxy-5-deazariboflavin synthase (351 aa).

Residues 35 to 275 (ITYSKNAFIP…EDISIQVPPN (241 aa)) enclose the Radical SAM core domain. [4Fe-4S] cluster contacts are provided by C49, C53, and C56.

Belongs to the radical SAM superfamily. CofG family. As to quaternary structure, consists of two subunits, CofG and CofH. Requires [4Fe-4S] cluster as cofactor.

The catalysed reaction is 5-amino-5-(4-hydroxybenzyl)-6-(D-ribitylimino)-5,6-dihydrouracil + S-adenosyl-L-methionine = 7,8-didemethyl-8-hydroxy-5-deazariboflavin + 5'-deoxyadenosine + L-methionine + NH4(+) + H(+). The protein operates within cofactor biosynthesis; coenzyme F0 biosynthesis. Catalyzes the radical-mediated synthesis of 7,8-didemethyl-8-hydroxy-5-deazariboflavin from 5-amino-5-(4-hydroxybenzyl)-6-(D-ribitylimino)-5,6-dihydrouracil. This chain is 7,8-didemethyl-8-hydroxy-5-deazariboflavin synthase, found in Methanococcus vannielii (strain ATCC 35089 / DSM 1224 / JCM 13029 / OCM 148 / SB).